The following is a 118-amino-acid chain: Small ribosomal subunit protein uS13 (118 aa).

Residues leucine 95–lysine 118 are disordered.

Belongs to the universal ribosomal protein uS13 family. In terms of assembly, part of the 30S ribosomal subunit. Forms a loose heterodimer with protein S19. Forms two bridges to the 50S subunit in the 70S ribosome.

Its function is as follows. Located at the top of the head of the 30S subunit, it contacts several helices of the 16S rRNA. In the 70S ribosome it contacts the 23S rRNA (bridge B1a) and protein L5 of the 50S subunit (bridge B1b), connecting the 2 subunits; these bridges are implicated in subunit movement. Contacts the tRNAs in the A and P-sites. This chain is Small ribosomal subunit protein uS13, found in Blochmanniella floridana.